The sequence spans 228 residues: Thermonuclease (228 aa).

An N-terminal signal peptide occupies residues 1–23 (MTEYLLSAGICMAIVSILLIGMA). The propeptide occupies 24–60 (ISNVSKGQYAKRFFFFATSCLVLTLVVVSSLSSSANA). Residues 58 to 70 (ANASQTDNGVNRS) show a composition bias toward polar residues. The tract at residues 58-83 (ANASQTDNGVNRSGSEDPTVYSATST) is disordered. D100 is a Ca(2+) binding site. R114 is an active-site residue. Residues D119 and T120 each coordinate Ca(2+). Catalysis depends on residues E122 and R166.

It belongs to the thermonuclease family. Ca(2+) serves as cofactor.

It is found in the secreted. It carries out the reaction Endonucleolytic cleavage to nucleoside 3'-phosphates and 3'-phosphooligonucleotide end-products.. In terms of biological role, enzyme that catalyzes the hydrolysis of both DNA and RNA at the 5' position of the phosphodiester bond. The polypeptide is Thermonuclease (nuc) (Staphylococcus aureus (strain Mu50 / ATCC 700699)).